A 366-amino-acid chain; its full sequence is Protein RecA (366 aa).

An ATP-binding site is contributed by 81-88; sequence GPESSGKT.

This sequence belongs to the RecA family.

It is found in the cytoplasm. Its function is as follows. Can catalyze the hydrolysis of ATP in the presence of single-stranded DNA, the ATP-dependent uptake of single-stranded DNA by duplex DNA, and the ATP-dependent hybridization of homologous single-stranded DNAs. It interacts with LexA causing its activation and leading to its autocatalytic cleavage. The sequence is that of Protein RecA from Leptospira interrogans serogroup Icterohaemorrhagiae serovar copenhageni (strain Fiocruz L1-130).